A 461-amino-acid chain; its full sequence is Cysteine--tRNA ligase (461 aa).

Residue C29 coordinates Zn(2+). The short motif at M31–H41 is the 'HIGH' region element. Zn(2+) contacts are provided by C213, H238, and E242. Residues K270–S274 carry the 'KMSKS' region motif. K273 lines the ATP pocket.

This sequence belongs to the class-I aminoacyl-tRNA synthetase family. In terms of assembly, monomer. It depends on Zn(2+) as a cofactor.

The protein localises to the cytoplasm. The enzyme catalyses tRNA(Cys) + L-cysteine + ATP = L-cysteinyl-tRNA(Cys) + AMP + diphosphate. The sequence is that of Cysteine--tRNA ligase from Delftia acidovorans (strain DSM 14801 / SPH-1).